A 395-amino-acid chain; its full sequence is S-adenosylmethionine synthase (395 aa).

Residue H14 coordinates ATP. A Mg(2+)-binding site is contributed by D16. E42 is a binding site for K(+). L-methionine is bound by residues E55 and Q98. A flexible loop region spans residues 98-108; sequence QSPDIALGVDK. Residues 174-176, 240-241, D249, 255-256, A272, and K276 contribute to the ATP site; these read DGK, RF, and RK. Position 249 (D249) interacts with L-methionine. Residue K280 coordinates L-methionine.

This sequence belongs to the AdoMet synthase family. In terms of assembly, homotetramer; dimer of dimers. It depends on Mg(2+) as a cofactor. K(+) serves as cofactor.

The protein resides in the cytoplasm. It carries out the reaction L-methionine + ATP + H2O = S-adenosyl-L-methionine + phosphate + diphosphate. It participates in amino-acid biosynthesis; S-adenosyl-L-methionine biosynthesis; S-adenosyl-L-methionine from L-methionine: step 1/1. Its function is as follows. Catalyzes the formation of S-adenosylmethionine (AdoMet) from methionine and ATP. The overall synthetic reaction is composed of two sequential steps, AdoMet formation and the subsequent tripolyphosphate hydrolysis which occurs prior to release of AdoMet from the enzyme. The sequence is that of S-adenosylmethionine synthase from Thermotoga maritima (strain ATCC 43589 / DSM 3109 / JCM 10099 / NBRC 100826 / MSB8).